A 493-amino-acid polypeptide reads, in one-letter code: Sulfoacetaldehyde dehydrogenase (acylating) (493 aa).

Residues Met-1–Gln-10 show a composition bias toward basic residues. Residues Met-1–Ala-21 form a disordered region. Cys-273 acts as the Nucleophile in catalysis.

The protein belongs to the aldehyde dehydrogenase family. As to quaternary structure, homodimer.

It localises to the cytoplasm. The enzyme catalyses sulfoacetaldehyde + NADP(+) + CoA = sulfoacetyl-CoA + NADPH + H(+). Functionally, involved in the degradation of sulfoacetate, a widespread natural product. Catalyzes the conversion of sulfoacetyl-CoA and NADPH to sulfoacetaldehyde, CoA and NADP(+). Specific for NADP(+) and sulfoacetaldehyde. In Cupriavidus necator (strain ATCC 17699 / DSM 428 / KCTC 22496 / NCIMB 10442 / H16 / Stanier 337) (Ralstonia eutropha), this protein is Sulfoacetaldehyde dehydrogenase (acylating).